The following is a 119-amino-acid chain: Large ribosomal subunit protein uL24 (119 aa).

It belongs to the universal ribosomal protein uL24 family. Part of the 50S ribosomal subunit.

One of two assembly initiator proteins, it binds directly to the 5'-end of the 23S rRNA, where it nucleates assembly of the 50S subunit. Functionally, located at the polypeptide exit tunnel on the outside of the subunit. The protein is Large ribosomal subunit protein uL24 of Methanosarcina acetivorans (strain ATCC 35395 / DSM 2834 / JCM 12185 / C2A).